The following is a 193-amino-acid chain: Probable DNA-directed RNA polymerase subunit delta (193 aa).

Residues 14-81 (LALVEIATAI…GNNEWGLRAW (68 aa)) enclose the HTH HARE-type domain. Acidic residues-rich tracts occupy residues 119-174 (DDDV…DDNL) and 182-193 (DLDDLSDGDIEK). The disordered stretch occupies residues 119-193 (DDDVIDYNDD…DDLSDGDIEK (75 aa)).

The protein belongs to the RpoE family. As to quaternary structure, RNAP is composed of a core of 2 alpha, a beta and a beta' subunits. The core is associated with a delta subunit and one of several sigma factors.

In terms of biological role, participates in both the initiation and recycling phases of transcription. In the presence of the delta subunit, RNAP displays an increased specificity of transcription, a decreased affinity for nucleic acids, and an increased efficiency of RNA synthesis because of enhanced recycling. The polypeptide is Probable DNA-directed RNA polymerase subunit delta (Leuconostoc citreum (strain KM20)).